The primary structure comprises 309 residues: Early nodulin-75 (309 aa).

Residues 1–25 form the signal peptide; the sequence is MTSVLHYSLLLLLLGVVILTTPVLA. Pro residues predominate over residues 56–67; sequence PPPVHHPPPEYQ. Residues 56–309 are disordered; that stretch reads PPPVHHPPPE…YGRYPPSKKN (254 aa). Composition is skewed to basic and acidic residues over residues 81–210 and 219–247; these read PHEK…EKPP and KPPH…HEKP. Pro residues-rich tracts occupy residues 248–276 and 283–302; these read PPVY…VYPP and IYEP…PYGR.

It belongs to the nodulin 75 family.

Its function is as follows. Involved in early stages of root nodule development. The sequence is that of Early nodulin-75 (ENOD2A) from Glycine max (Soybean).